A 443-amino-acid chain; its full sequence is Phosphoglucosamine mutase (443 aa).

Ser-102 serves as the catalytic Phosphoserine intermediate. 4 residues coordinate Mg(2+): Ser-102, Asp-241, Asp-243, and Asp-245. Ser-102 is subject to Phosphoserine.

The protein belongs to the phosphohexose mutase family. Mg(2+) is required as a cofactor. In terms of processing, activated by phosphorylation.

The enzyme catalyses alpha-D-glucosamine 1-phosphate = D-glucosamine 6-phosphate. Catalyzes the conversion of glucosamine-6-phosphate to glucosamine-1-phosphate. This Albidiferax ferrireducens (strain ATCC BAA-621 / DSM 15236 / T118) (Rhodoferax ferrireducens) protein is Phosphoglucosamine mutase.